Reading from the N-terminus, the 479-residue chain is NAC domain-containing protein 45 (479 aa).

One can recognise an NAC domain in the interval 6 to 157 (LPPGFRFHPT…AYALCRVFKK (152 aa)). The DNA-binding element occupies 105–163 (IGTKKTLVYYRGRAPHGIRTGWVMHEYRLDETECEPSAYGMQDAYALCRVFKKIVIEAK).

In terms of tissue distribution, expressed in a few sieve element cells before enucleation and in phloem-pole pericycle cells.

It localises to the nucleus. In terms of biological role, transcription factor directing sieve element enucleation and cytosol degradation. Not required for formation of lytic vacuoles. Regulates, with NAC086, the transcription of NEN1, NEN2, NEN3, NEN4, RTM1, RTM2, UBP16, PLDZETA, ABCB10 and At1g26450. The polypeptide is NAC domain-containing protein 45 (Arabidopsis thaliana (Mouse-ear cress)).